The sequence spans 177 residues: CASP-like protein 2U1 (177 aa).

A helical membrane pass occupies residues 1 to 21 (MVLRIVASLLSIAALVLMAKD). At 22 to 48 (KQVVYLNLAGEELTLEAKHSYVEAFVY) the chain is on the cytoplasmic side. Residues 49–69 (LVYSNGLVAIYCFLLVFALVF) form a helical membrane-spanning segment. The Extracellular portion of the chain corresponds to 70–80 (RLIDKAGCGKS). Residues 81-101 (AAWIIFLLDQGLAYVLLAAAA) form a helical membrane-spanning segment. Residues 102 to 131 (ASTEVAYVAKRGNNKVGWSEVCSTFGHFCN) are Cytoplasmic-facing. A helical transmembrane segment spans residues 132–152 (LVGVSIVITFISVLAMATLSV). Residues 153–177 (MSARRLFKTYGPERKQISSNDAPAI) lie on the Extracellular side of the membrane.

It belongs to the Casparian strip membrane proteins (CASP) family. As to quaternary structure, homodimer and heterodimers.

It is found in the cell membrane. The polypeptide is CASP-like protein 2U1 (Osmunda lancea (Fern)).